We begin with the raw amino-acid sequence, 305 residues long: Dihydroorotate dehydrogenase B (NAD(+)), catalytic subunit (305 aa).

Residues S23 and 47–48 each bind FMN; that span reads KG. Substrate is bound by residues K47 and 71–75; that span reads NAIGL. N101 and N129 together coordinate FMN. Position 129 (N129) interacts with substrate. The active-site Nucleophile is the C132. Residues K167 and I193 each coordinate FMN. Residue 194–195 participates in substrate binding; sequence NT. FMN contacts are provided by residues G219, 245-246, and 267-268; these read GG and GT.

Belongs to the dihydroorotate dehydrogenase family. Type 1 subfamily. As to quaternary structure, heterotetramer of 2 PyrK and 2 PyrD type B subunits. FMN serves as cofactor.

The protein localises to the cytoplasm. The enzyme catalyses (S)-dihydroorotate + NAD(+) = orotate + NADH + H(+). It functions in the pathway pyrimidine metabolism; UMP biosynthesis via de novo pathway; orotate from (S)-dihydroorotate (NAD(+) route): step 1/1. Catalyzes the conversion of dihydroorotate to orotate with NAD(+) as electron acceptor. This Geotalea daltonii (strain DSM 22248 / JCM 15807 / FRC-32) (Geobacter daltonii) protein is Dihydroorotate dehydrogenase B (NAD(+)), catalytic subunit (pyrD).